The sequence spans 2513 residues: Highly reducing polyketide synthase ACRTS2 (2513 aa).

The region spanning 4 to 429 is the Ketosynthase family 3 (KS3) domain; the sequence is DTPVAIIGVS…GSSSAVIIDR (426 aa). Residues C174, H313, and H353 each act as for beta-ketoacyl synthase activity in the active site. Positions 547–875 are malonyl-CoA:ACP transacylase (MAT) domain; that stretch reads VFTGQGAQYA…NYLPSLLRGT (329 aa). Residue S635 is the For malonyltransferase activity of the active site. The tract at residues 942 to 1074 is N-terminal hotdog fold; the sequence is HALIGRKAPS…GKIEPEIADL (133 aa). Residues 942 to 1253 form a dehydratase (DH) domain region; that stretch reads HALIGRKAPS…TFRTVSSADD (312 aa). Residues 942–1254 enclose the PKS/mFAS DH domain; the sequence is HALIGRKAPS…FRTVSSADDQ (313 aa). The Proton acceptor; for dehydratase activity role is filled by H974. The tract at residues 1092–1254 is C-terminal hotdog fold; sequence AGVIEHDMDN…FRTVSSADDQ (163 aa). D1161 functions as the Proton donor; for dehydratase activity in the catalytic mechanism. The interval 1407-1600 is methyltransferase (CMet) domain; it reads SKIIGYLTEN…IPTNYRTDNP (194 aa). An enoylreductase (ER) domain region spans residues 1816-2127; the sequence is GSPDTIYFRR…SRDHIGRLVV (312 aa). The interval 2152–2327 is ketoreductase (KR) domain; the sequence is ATYLVAGGTR…YTVSIGLPVV (176 aa). The region spanning 2433 to 2510 is the Carrier domain; the sequence is DPLTGLIEAL…ALAVNILAQR (78 aa). S2470 carries the O-(pantetheine 4'-phosphoryl)serine modification.

Its pathway is mycotoxin biosynthesis. Its function is as follows. Highly reducing polyketide synthase; part of the gene cluster that mediates the biosynthesis of the host-selective toxins (HSTs) ACR-toxins responsible for brown spot of rough lemon disease by the rough lemon pathotype. ACR-toxins cause uncoupling of mitochondrial oxidative-phosphorylation similar to that of classic protonophore. The structure of the major form of ACR-toxin (ACR-toxin I) consists of an alpha-dihydropyrone ring in a 19-carbon polyalcohol, a typical polyketide structure. Minor toxins were characterized as having a pyrone ring with polyalcohol side chains different in length and showing weaker toxicity. The highly reducing polyketide synthase ACRTS2 has all necessary enzymatic domains for multiple cycles of condensation and beta-keto processing. The cytochrome P450 monooxygenase ACRTS1 has also been shown to be essential for ACR-toxin biosynthesis, however its exact role in the pathway has not been elucidated yet. This Alternaria alternata (Alternaria rot fungus) protein is Highly reducing polyketide synthase ACRTS2.